The primary structure comprises 365 residues: 7-methylxanthine methyltransferase PCS1 (365 aa).

Tyr-19 lines the S-adenosyl-L-homocysteine pocket. Thr-26 is a caffeine binding site. 6 residues coordinate S-adenosyl-L-homocysteine: Cys-62, Asn-67, Asp-99, Leu-100, Ser-134, and Phe-135. Caffeine is bound by residues Tyr-152, His-155, and Trp-156. Asn-173 lines the Mg(2+) pocket. A caffeine-binding site is contributed by His-221. Mg(2+)-binding residues include Asp-259, Phe-261, and Asn-262. Phe-317 contributes to the caffeine binding site.

Belongs to the methyltransferase superfamily. Type-7 methyltransferase family. Mg(2+) is required as a cofactor.

It catalyses the reaction 1,7-dimethylxanthine + S-adenosyl-L-methionine = caffeine + S-adenosyl-L-homocysteine + H(+). The catalysed reaction is 7-methylxanthine + S-adenosyl-L-methionine = theobromine + S-adenosyl-L-homocysteine + H(+). It participates in alkaloid biosynthesis. Its function is as follows. Involved in the biosynthesis of caffeine. Catalyzes the conversion of 7-methylxanthine (7mX) to theobromine, and, to some extent, the conversion of paraxanthine to caffeine, but seems not able to convert theobromine to caffeine. The sequence is that of 7-methylxanthine methyltransferase PCS1 from Camellia ptilophylla (Cocoa tea).